A 138-amino-acid chain; its full sequence is Regulator of ribonuclease activity B (138 aa).

The tract at residues 114 to 138 is disordered; sequence YFEDPNGEDGDDEDFVDEDDDGVRH. Acidic residues predominate over residues 118 to 138; it reads PNGEDGDDEDFVDEDDDGVRH.

This sequence belongs to the RraB family. As to quaternary structure, interacts with the C-terminal region of Rne.

The protein localises to the cytoplasm. In terms of biological role, globally modulates RNA abundance by binding to RNase E (Rne) and regulating its endonucleolytic activity. Can modulate Rne action in a substrate-dependent manner by altering the composition of the degradosome. The protein is Regulator of ribonuclease activity B of Escherichia coli (strain K12).